Consider the following 224-residue polypeptide: Voltage-dependent calcium channel gamma-1 subunit (224 aa).

Residues 1–10 lie on the Cytoplasmic side of the membrane; sequence MSQTKALKVR. Residues 11 to 29 traverse the membrane as a helical segment; it reads VTLFCILVGIVLALVAVVT. Residues 30–110 are Extracellular-facing; the sequence is DHWAVLSPHV…TQKEYSISAA (81 aa). Asn-43 and Asn-81 each carry an N-linked (GlcNAc...) asparagine glycan. A disulfide bridge links Cys-57 with Cys-82. Residues 111 to 131 traverse the membrane as a helical segment; that stretch reads AIAIFSLGFIILGTICGLLSF. Residues 132–136 lie on the Cytoplasmic side of the membrane; that stretch reads RKKRD. The helical transmembrane segment at 137–157 threads the bilayer; sequence YLLRPASMFYAFAGLCIFVSV. Over 158–181 the chain is Extracellular; it reads EVMRQSVKRMIDSEDTVWIDYYYG. Residues 182 to 206 traverse the membrane as a helical segment; it reads WSFACACAAFILLFLGGIALLLFSL. Residues 207-224 are Cytoplasmic-facing; the sequence is PRMPQYPWESCMDAEPEH.

It belongs to the PMP-22/EMP/MP20 family. CACNG subfamily. As to quaternary structure, component of a calcium channel complex consisting of a pore-forming alpha subunit (CACNA1S) and the ancillary subunits CACNB1 or CACNB2, CACNG1 and CACNA2D1. The channel complex contains alpha, beta, gamma and delta subunits in a 1:1:1:1 ratio, i.e. it contains either CACNB1 or CACNB2. Post-translationally, N-glycosylated.

It localises to the cell membrane. The protein localises to the sarcolemma. Regulatory subunit of the voltage-gated calcium channel that gives rise to L-type calcium currents in skeletal muscle. Regulates channel inactivation kinetics. This chain is Voltage-dependent calcium channel gamma-1 subunit (CACNG1), found in Sus scrofa (Pig).